We begin with the raw amino-acid sequence, 567 residues long: Nucleolus and neural progenitor protein (567 aa).

Phosphoserine is present on Ser-265. The segment at 437–457 (SKHHLRQRRSQNKFLRRQRKP) is disordered. The nuclear localization signal stretch occupies residues 442-460 (RQRRSQNKFLRRQRKPQRK).

The protein belongs to the nepro family.

Its subcellular location is the nucleus. It is found in the nucleolus. May play a role in cortex development as part of the Notch signaling pathway. Downstream of Notch may repress the expression of proneural genes and inhibit neuronal differentiation thereby maintaining neural progenitors. May also play a role in preimplentation embryo development. In Homo sapiens (Human), this protein is Nucleolus and neural progenitor protein.